Consider the following 399-residue polypeptide: Interferon regulatory factor 9 (399 aa).

Residues 9-116 (TRKLRSWIVE…EPYKVYRILP (108 aa)) constitute a DNA-binding region (IRF tryptophan pentad repeat). A disordered region spans residues 118–189 (GTLPNQPRNQ…CNSELEEGAG (72 aa)). Over residues 120 to 129 (LPNQPRNQKS) the composition is skewed to polar residues. Position 139 is a phosphoserine (S139). Residues 148 to 157 (NGRTNGVVNH) show a composition bias toward polar residues. Low complexity predominate over residues 171 to 189 (SNRSDSNSNCNSELEEGAG). Phosphoserine is present on S393.

Belongs to the IRF family. As to quaternary structure, interacts with STAT2 in the cytoplasm. Forms the interferon-stimulated gene factor 3 complex (ISGF3) with the heterodimer STAT1:STAT2; upon stimulation.

It is found in the nucleus. In terms of biological role, transcription factor that plays an essential role in anti-viral immunity. It mediates signaling by type I IFNs (IFN-alpha and IFN-beta). Following type I IFN binding to cell surface receptors, Jak kinases (TYK2 and JAK1) are activated, leading to tyrosine phosphorylation of STAT1 and STAT2. IRF9/ISGF3G associates with the phosphorylated STAT1:STAT2 dimer to form a complex termed ISGF3 transcription factor, that enters the nucleus. ISGF3 binds to the IFN stimulated response element (ISRE) to activate the transcription of interferon stimulated genes, which drive the cell in an antiviral state. This is Interferon regulatory factor 9 (Irf9) from Mus musculus (Mouse).